An 88-amino-acid chain; its full sequence is Toxin RelE2 (88 aa).

This sequence belongs to the RelE toxin family.

Toxic component of a type II toxin-antitoxin (TA) system. Its toxic effect is neutralized by coexpression with cognate antitoxin RelB2 but no other ParD or RelB antitoxin. The chain is Toxin RelE2 (relE2) from Caulobacter vibrioides (strain ATCC 19089 / CIP 103742 / CB 15) (Caulobacter crescentus).